Reading from the N-terminus, the 363-residue chain is Mannose-1-phosphate guanyltransferase (363 aa).

Belongs to the transferase hexapeptide repeat family.

It is found in the cytoplasm. The catalysed reaction is alpha-D-mannose 1-phosphate + GTP + H(+) = GDP-alpha-D-mannose + diphosphate. It functions in the pathway nucleotide-sugar biosynthesis; GDP-alpha-D-mannose biosynthesis; GDP-alpha-D-mannose from alpha-D-mannose 1-phosphate (GTP route): step 1/1. Its function is as follows. Involved in cell wall synthesis where it is required for glycosylation. Involved in cell cycle progression through cell-size checkpoint. The sequence is that of Mannose-1-phosphate guanyltransferase (MPG1) from Yarrowia lipolytica (strain CLIB 122 / E 150) (Yeast).